Here is a 751-residue protein sequence, read N- to C-terminus: Proton-associated sugar transporter A (751 aa).

6 helical membrane passes run 93-113 (ILFGIEFSYAMETAYVTPVLL), 123-143 (SLVWFISPILGFLLQPLLGAW), 155-175 (RPFILVLAIGALLGLSLLLNG), 191-211 (WGILLTVCGVVLMDFSADSAD), 233-253 (IHALMAGLGGGFGYVVGGIHW), and 268-288 (VIYVFTAITLSVTTVLTLISI). The residue at position 500 (Thr-500) is a Phosphothreonine. 6 helical membrane-spanning segments follow: residues 536 to 556 (GWLSFEGMLLFYTDFMGEVVF), 576 to 596 (VTMGCWGMCIYAFSAAFYSAI), 606 to 626 (VRTLYFIAYLAFGLGTGLATL), 630 to 650 (LYVVLSLCTTYGILFSTLCTL), 688 to 708 (FLAQILVSLVLGPLTSAVGSA), and 710 to 730 (GVMYFSSLVSFLGCLYSSLCV).

The protein belongs to the glycoside-pentoside-hexuronide (GPH) cation symporter transporter (TC 2.A.2) family.

The protein resides in the membrane. It carries out the reaction D-galactose(in) + H(+)(in) = D-galactose(out) + H(+)(out). The enzyme catalyses D-glucose(out) + H(+)(out) = D-glucose(in) + H(+)(in). Functionally, proton-associated glucose transporter in the brain. The protein is Proton-associated sugar transporter A of Mus musculus (Mouse).